The primary structure comprises 133 residues: UPF0102 protein AB57_1130 (133 aa).

It belongs to the UPF0102 family.

The sequence is that of UPF0102 protein AB57_1130 from Acinetobacter baumannii (strain AB0057).